We begin with the raw amino-acid sequence, 302 residues long: Probable protein ABIL4 (302 aa).

Disordered stretches follow at residues 151–179 and 220–256; these read PSTG…YPSA and LLGK…QPGF. Polar residues predominate over residues 161-170; sequence ARLQTDNGQD.

Belongs to the ABI family. In terms of assembly, binds SCAR.

The protein resides in the cytoplasm. It localises to the cytoskeleton. Its function is as follows. Involved in regulation of actin and microtubule organization. Part of a WAVE complex that activates the Arp2/3 complex. The chain is Probable protein ABIL4 from Oryza sativa subsp. japonica (Rice).